The primary structure comprises 455 residues: tRNA modification GTPase MnmE (455 aa).

The (6S)-5-formyl-5,6,7,8-tetrahydrofolate site is built by arginine 24, glutamate 81, and lysine 121. One can recognise a TrmE-type G domain in the interval 217–378 (GMKVVIAGRP…LKEHLKDIMG (162 aa)). Asparagine 227 is a K(+) binding site. Residues 227–232 (NAGKSS), 246–252 (TDIAGTT), 271–274 (DTAG), and 336–339 (NKAD) each bind GTP. Serine 231 is a binding site for Mg(2+). Positions 246, 248, and 251 each coordinate K(+). Position 252 (threonine 252) interacts with Mg(2+). Lysine 455 contacts (6S)-5-formyl-5,6,7,8-tetrahydrofolate.

The protein belongs to the TRAFAC class TrmE-Era-EngA-EngB-Septin-like GTPase superfamily. TrmE GTPase family. Homodimer. Heterotetramer of two MnmE and two MnmG subunits. It depends on K(+) as a cofactor.

The protein resides in the cytoplasm. In terms of biological role, exhibits a very high intrinsic GTPase hydrolysis rate. Involved in the addition of a carboxymethylaminomethyl (cmnm) group at the wobble position (U34) of certain tRNAs, forming tRNA-cmnm(5)s(2)U34. In Psychromonas ingrahamii (strain DSM 17664 / CCUG 51855 / 37), this protein is tRNA modification GTPase MnmE.